The chain runs to 52 residues: MKRQKRDRLARALSRGYHAGILGRPRENCPYHSLDARSYWLGGWRQAKEDRV.

This sequence belongs to the ribosome modulation factor family.

The protein localises to the cytoplasm. In terms of biological role, during stationary phase, converts 70S ribosomes to an inactive dimeric form (100S ribosomes). The protein is Ribosome modulation factor of Xenorhabdus nematophila (strain ATCC 19061 / DSM 3370 / CCUG 14189 / LMG 1036 / NCIMB 9965 / AN6).